The following is a 369-amino-acid chain: 3,7-dimethylxanthine N-methyltransferase TCS1 (369 aa).

An S-adenosyl-L-homocysteine-binding site is contributed by Tyr-24. Thr-31 contacts caffeine. S-adenosyl-L-homocysteine is bound by residues Cys-66, Asn-71, Asp-103, Leu-104, Ser-138, and Phe-139. Caffeine-binding residues include Tyr-156, His-159, and Trp-160. A Mg(2+)-binding site is contributed by Asn-177. Arg-225 is a binding site for caffeine. Mg(2+) is bound by residues Asp-263, Phe-265, and Asn-266. Residue Phe-321 coordinates caffeine.

Belongs to the methyltransferase superfamily. Type-7 methyltransferase family. Mg(2+) serves as cofactor. As to expression, expressed in young leaves and flowers.

The catalysed reaction is 7-methylxanthine + S-adenosyl-L-methionine = theobromine + S-adenosyl-L-homocysteine + H(+). It carries out the reaction theobromine + S-adenosyl-L-methionine = caffeine + S-adenosyl-L-homocysteine + H(+). The enzyme catalyses 1,7-dimethylxanthine + S-adenosyl-L-methionine = caffeine + S-adenosyl-L-homocysteine + H(+). It participates in alkaloid biosynthesis. In terms of biological role, involved in the biosynthesis of caffeine. Catalyzes the conversion of 7-methylxanthine (7mX) to theobromine and of theobromine to caffeine. Has 3-N- and 1-N-methylation activity. The polypeptide is 3,7-dimethylxanthine N-methyltransferase TCS1 (Camellia sinensis (Tea plant)).